The sequence spans 314 residues: Cytochrome b558/566 subunit B (314 aa).

A run of 8 helical transmembrane segments spans residues 47–67 (LLLVIGNISFYFFFVFLLIVS), 76–96 (SLIPLTIILTISPFITLIPNY), 102–122 (LYSLEIAILILGLASTIEGLI), 127–147 (LSILLIPTLVLVNLGIYASIL), 155–175 (LFISYLTIYLISIAGYLAYVI), 186–206 (YIAISVGLLSMIPFIFFENII), 233–253 (HITLLVMALGLSTMGIVTSLI), and 264–284 (FLIITTVFLGIDGFSLLIYML).

It localises to the cell membrane. In Saccharolobus solfataricus (strain ATCC 35092 / DSM 1617 / JCM 11322 / P2) (Sulfolobus solfataricus), this protein is Cytochrome b558/566 subunit B (cbsB).